A 185-amino-acid polypeptide reads, in one-letter code: Adenine phosphoribosyltransferase (185 aa).

The protein belongs to the purine/pyrimidine phosphoribosyltransferase family. As to quaternary structure, homodimer.

The protein localises to the cytoplasm. The catalysed reaction is AMP + diphosphate = 5-phospho-alpha-D-ribose 1-diphosphate + adenine. It participates in purine metabolism; AMP biosynthesis via salvage pathway; AMP from adenine: step 1/1. Catalyzes a salvage reaction resulting in the formation of AMP, that is energically less costly than de novo synthesis. This Pectobacterium carotovorum subsp. carotovorum (strain PC1) protein is Adenine phosphoribosyltransferase.